A 180-amino-acid polypeptide reads, in one-letter code: Segregation and condensation protein B (180 aa).

Belongs to the ScpB family. In terms of assembly, homodimer. Homodimerization may be required to stabilize the binding of ScpA to the Smc head domains. Component of a cohesin-like complex composed of ScpA, ScpB and the Smc homodimer, in which ScpA and ScpB bind to the head domain of Smc. The presence of the three proteins is required for the association of the complex with DNA.

Its subcellular location is the cytoplasm. Its function is as follows. Participates in chromosomal partition during cell division. May act via the formation of a condensin-like complex containing Smc and ScpA that pull DNA away from mid-cell into both cell halves. The chain is Segregation and condensation protein B from Staphylococcus aureus (strain Mu3 / ATCC 700698).